Reading from the N-terminus, the 1021-residue chain is Contactin-1 (1021 aa).

The N-terminal stretch at 1–20 (MKTPLLVSHLLLISLTSCLG) is a signal peptide. Ig-like C2-type domains lie at 41–131 (PIFE…ATLS), 137–223 (PFPP…KSVF), 241–326 (PADI…ARIY), 331–407 (PEWV…AELK), 413–500 (PTFE…GTLV), and 504–603 (PTRI…LVVR). Disulfide bonds link C65-C114 and C158-C211. Residues N208 and N258 are each glycosylated (N-linked (GlcNAc...) asparagine). C263 and C310 are oxidised to a cystine. N338 carries an N-linked (GlcNAc...) asparagine glycan. 2 disulfide bridges follow: C352–C391 and C436–C484. N-linked (GlcNAc...) asparagine glycans are attached at residues N457, N473, N494, and N521. C526 and C585 form a disulfide bridge. A glycan (N-linked (GlcNAc...) asparagine) is linked at N593. Fibronectin type-III domains are found at residues 608–706 (PPGG…TDGA), 711–808 (APSD…SAQD), 813–908 (APTE…APPS), and 909–1002 (QPPR…TLSS). The tract at residues 695 to 719 (SIPSNRIKTDGAAPNVAPSDVGGGG) is disordered. The N-linked (GlcNAc...) asparagine glycan is linked to N935. S1001 carries the GPI-anchor amidated serine lipid modification. The propeptide at 1002-1021 (SGLLSLLLPSLGFLVFYSEF) is removed in mature form.

The protein belongs to the immunoglobulin superfamily. Contactin family. As to quaternary structure, monomer. Interacts with NOTCH1. Interacts with CNTNAP1 in cis form and TNR. Binds to the carbonic-anhydrase like domain of PTPRZ1. Detected in a complex with NRCAM and PTPRB. Interacts with TASOR. In terms of tissue distribution, expressed by neurons, oligodendrocytes and their progenitors (at protein level). Myelination regulates the expression being down-regulated when neurons are in contact with Schwann cells.

It is found in the cell membrane. Its function is as follows. Contactins mediate cell surface interactions during nervous system development. Involved in the formation of paranodal axo-glial junctions in myelinated peripheral nerves and in the signaling between axons and myelinating glial cells via its association with CNTNAP1. Participates in oligodendrocytes generation by acting as a ligand of NOTCH1. Its association with NOTCH1 promotes NOTCH1 activation through the released notch intracellular domain (NICD) and subsequent translocation to the nucleus. Interaction with TNR induces a repulsion of neurons and an inhibition of neurite outgrowth. The chain is Contactin-1 (Cntn1) from Rattus norvegicus (Rat).